A 271-amino-acid chain; its full sequence is uncharacterized protein (271 aa).

This sequence belongs to the HAD-like hydrolase superfamily.

This is an uncharacterized protein from Staphylococcus aureus (strain MRSA252).